Here is a 144-residue protein sequence, read N- to C-terminus: Oleosin H2 (144 aa).

Ala-2 is modified (N-acetylalanine). A run of 3 helical transmembrane segments spans residues 28–48 (VLAV…AGLI), 53–73 (IIGL…LVPA), and 75–95 (LTIA…ITAL). The Proline-knot signature appears at 61–72 (PLFVIFSPILVP). Positions 124–144 (QETVGQKTREAGQRSQDVIRP) are disordered.

The protein belongs to the oleosin family. As to expression, expressed in seeds (at protein level).

It is found in the lipid droplet. The protein resides in the membrane. May have a structural role to stabilize the lipid body during desiccation of the seed by preventing coalescence of the oil. Probably interacts with both lipid and phospholipid moieties of lipid bodies. May also provide recognition signals for specific lipase anchorage in lipolysis during seedling growth. The protein is Oleosin H2 of Sesamum indicum (Oriental sesame).